The primary structure comprises 83 residues: uncharacterized protein (83 aa).

This is an uncharacterized protein from Escherichia phage 186 (Bacteriophage 186).